The primary structure comprises 1489 residues: ABC transporter FUM19 (1489 aa).

10 helical membrane-spanning segments follow: residues 33–53 (IIFF…RIFV), 84–104 (CFSS…ALSY), 116–136 (LLSI…RTLW), 143–163 (LEYG…FAVW), 264–284 (LLLP…QAFL), 302–322 (WGLI…TSLY), 373–393 (FLNL…AWFL), 397–417 (VGIA…GVSI), 482–502 (IASL…MLAA), and 511–531 (HKVY…GSIF). The ABC transmembrane type-1 1 domain maps to 272–539 (IALIGLSLAQ…IFRSVSPLMS (268 aa)). The region spanning 591 to 823 (VKVIQASFGW…YQSHLQSLCI (233 aa)) is the ABC transporter 1 domain. N-linked (GlcNAc...) asparagine glycosylation is found at asparagine 612 and asparagine 616. 625-632 (GPVGSGKS) lines the ATP pocket. N-linked (GlcNAc...) asparagine glycosylation is present at asparagine 670. Basic and acidic residues predominate over residues 852 to 862 (EQTRSSRRGAD). The interval 852 to 874 (EQTRSSRRGADNQETIASGADSS) is disordered. The segment covering 863–874 (NQETIASGADSS) has biased composition (polar residues). 6 helical membrane-spanning segments follow: residues 890-910 (AVPP…GFLY), 945-965 (ILAL…FALI), 977-999 (AITR…NYFS), 1031-1051 (AASS…LYFV), 1120-1140 (WLLF…VALV), and 1149-1169 (GFAG…TNVV). The region spanning 902-1187 (SSLSYGFLYS…SMGAVSRLKA (286 aa)) is the ABC transmembrane type-1 2 domain. The ABC transporter 2 domain maps to 1214 to 1485 (IKIDGVSASY…KEGKFRALWE (272 aa)). 1254–1261 (GRTGSGKS) serves as a coordination point for ATP.

The protein belongs to the ABC transporter superfamily. ABCC family. Conjugate transporter (TC 3.A.1.208) subfamily.

The protein resides in the cell membrane. ABC transporter that may provide the dual role of fumonisin export and self-protection by allowing the fungus to evade the harmful effect of its own fumonisin production. Plays a role in the repression of the gene cluster that mediates fumonisin biosynthesis. The chain is ABC transporter FUM19 from Gibberella moniliformis (strain M3125 / FGSC 7600) (Maize ear and stalk rot fungus).